A 377-amino-acid polypeptide reads, in one-letter code: Protein MULTIPOLAR SPINDLE 1 (377 aa).

The Nuclear localization signal signature appears at 117–124 (LRRRFLRL).

As to expression, expressed in roots, stems, leaves, inflorescences and seedlings. Strongly expressed in meiocytes.

Its subcellular location is the nucleus. It localises to the cytoplasm. The protein localises to the cytoskeleton. It is found in the spindle. Involved in meiotic spindle organization in meiocytes thus regulating chromosome segregation. Required for formation of meiotic DNA double-strand breaks (DSBs) during early recombination processes. In Arabidopsis thaliana (Mouse-ear cress), this protein is Protein MULTIPOLAR SPINDLE 1.